The sequence spans 286 residues: MKRLLSIITAVMMLALALTGCAAKQSPEGEVEKTQAKGSIILATTTSTSDSGLLDYLLPEFTKDTGIEAKVVAVGTGQALQMGKDGEADVLLVHSKAAEEEFVAAGDGLERKDVMYNDFILVGPANDPLKLKQELPNDIVGALKKISEQKFKFISRGDDSGTHKKELALWTEVGITPEGDYYVSAGRGMGDVLKMADEMQAYTIADRGTYLSMKADLGLDIIVEKDTNLFNQYGVIPVNPDKNENINAEGAKAFEEWILSEKAQSLIGEYGKEKYGAPLFTPNAAK.

The first 20 residues, 1–20, serve as a signal peptide directing secretion; the sequence is MKRLLSIITAVMMLALALTG. Cysteine 21 carries N-palmitoyl cysteine lipidation. The S-diacylglycerol cysteine moiety is linked to residue cysteine 21.

In terms of assembly, monomer. The complex is composed of two ATP-binding proteins (TupC), two transmembrane proteins (TupB) and a solute-binding protein (TupA).

It is found in the cell membrane. Its function is as follows. Part of an ABC transporter complex involved in tungstate uptake. Specifically binds tungstate. The protein is Tungstate-binding protein TupA of Peptoclostridium acidaminophilum (Eubacterium acidaminophilum).